The following is a 553-amino-acid chain: Arginine--tRNA ligase (553 aa).

Residues 132–140 (PTGDLHIGH) carry the 'HIGH' region motif.

The protein belongs to the class-I aminoacyl-tRNA synthetase family. In terms of assembly, monomer.

It localises to the cytoplasm. It catalyses the reaction tRNA(Arg) + L-arginine + ATP = L-arginyl-tRNA(Arg) + AMP + diphosphate. The sequence is that of Arginine--tRNA ligase from Staphylococcus aureus (strain Mu50 / ATCC 700699).